Reading from the N-terminus, the 495-residue chain is Alpha-1B-glycoprotein (495 aa).

Positions 1-21 (MSMLVVFLLLWGVTWGPVTEA) are cleaved as a signal peptide. Ig-like V-type domains follow at residues 22–113 (AIFY…LTGP), 114–206 (KSLP…ELAA), 207–299 (PPPP…PVEL), 300–397 (ILSD…LHVD), and 398–495 (GPPP…VAES). Asparagine 44 carries N-linked (GlcNAc...) (complex) asparagine glycosylation. Disulfide bonds link cysteine 49/cysteine 93, cysteine 139/cysteine 182, cysteine 232/cysteine 279, cysteine 325/cysteine 374, and cysteine 423/cysteine 470. N-linked (GlcNAc...) asparagine glycosylation is present at asparagine 179. N-linked (GlcNAc...) asparagine glycans are attached at residues asparagine 363 and asparagine 371.

As to quaternary structure, interacts with CRISP3. Plasma.

The protein localises to the secreted. The chain is Alpha-1B-glycoprotein (A1BG) from Homo sapiens (Human).